We begin with the raw amino-acid sequence, 311 residues long: Protein translocase subunit SecF (311 aa).

6 consecutive transmembrane segments (helical) span residues 23-42, 140-160, 164-184, 194-214, 246-266, and 272-292; these read VSYSFSIILSLISLIWISIY, IEAGAMAMLFSFLAIMVYIGV, WYFGFGILIALVHDVILALGF, LSTIAAVLTIIGYSVNDSVVI, ILTVITTLLANLALILFGGKA, and VLVFFGIIAGTYSSIFISAPI.

It belongs to the SecD/SecF family. SecF subfamily. As to quaternary structure, forms a complex with SecD. Part of the essential Sec protein translocation apparatus which comprises SecA, SecYEG and auxiliary proteins SecDF-YajC and YidC.

It localises to the cell inner membrane. Part of the Sec protein translocase complex. Interacts with the SecYEG preprotein conducting channel. SecDF uses the proton motive force (PMF) to complete protein translocation after the ATP-dependent function of SecA. The protein is Protein translocase subunit SecF of Rickettsia prowazekii (strain Madrid E).